We begin with the raw amino-acid sequence, 406 residues long: Putative colanic acid biosynthesis glycosyltransferase WcaL (406 aa).

Belongs to the glycosyltransferase group 1 family. Glycosyltransferase 4 subfamily.

It functions in the pathway slime biogenesis; slime polysaccharide biosynthesis. The chain is Putative colanic acid biosynthesis glycosyltransferase WcaL (wcaL) from Salmonella typhimurium (strain LT2 / SGSC1412 / ATCC 700720).